The chain runs to 710 residues: DNA ligase (710 aa).

Residues 53–57 (DAEYD), 102–103 (SL), and Glu136 each bind NAD(+). The N6-AMP-lysine intermediate role is filled by Lys138. NAD(+) is bound by residues Arg159, Glu196, Lys312, and Lys336. Cys429, Cys432, Cys453, and Cys459 together coordinate Zn(2+). The 78-residue stretch at 633–710 (ETSSPVAGKT…DEDQWIELAG (78 aa)) folds into the BRCT domain.

This sequence belongs to the NAD-dependent DNA ligase family. LigA subfamily. Requires Mg(2+) as cofactor. It depends on Mn(2+) as a cofactor.

The catalysed reaction is NAD(+) + (deoxyribonucleotide)n-3'-hydroxyl + 5'-phospho-(deoxyribonucleotide)m = (deoxyribonucleotide)n+m + AMP + beta-nicotinamide D-nucleotide.. Functionally, DNA ligase that catalyzes the formation of phosphodiester linkages between 5'-phosphoryl and 3'-hydroxyl groups in double-stranded DNA using NAD as a coenzyme and as the energy source for the reaction. It is essential for DNA replication and repair of damaged DNA. The polypeptide is DNA ligase (Parvibaculum lavamentivorans (strain DS-1 / DSM 13023 / NCIMB 13966)).